The following is a 239-amino-acid chain: tRNA (guanine-N(1)-)-methyltransferase (239 aa).

S-adenosyl-L-methionine contacts are provided by residues Gly108 and 127-132 (LGDYVL).

This sequence belongs to the RNA methyltransferase TrmD family. Homodimer.

It localises to the cytoplasm. The catalysed reaction is guanosine(37) in tRNA + S-adenosyl-L-methionine = N(1)-methylguanosine(37) in tRNA + S-adenosyl-L-homocysteine + H(+). Its function is as follows. Specifically methylates guanosine-37 in various tRNAs. This is tRNA (guanine-N(1)-)-methyltransferase from Streptococcus pneumoniae (strain JJA).